The sequence spans 388 residues: GTPase Obg (388 aa).

The Obg domain maps to 1-159; sequence MKFIDEASIR…RSLRLELLLL (159 aa). Positions 160–333 constitute an OBG-type G domain; that stretch reads ADVGLLGMPN…LSLKLLDYIA (174 aa). GTP-binding positions include 166-173, 191-195, 213-216, 283-286, and 314-316; these read GMPNAGKS, FTTLV, DIPG, NKTD, and SAF. Residues Ser-173 and Thr-193 each coordinate Mg(2+).

Belongs to the TRAFAC class OBG-HflX-like GTPase superfamily. OBG GTPase family. Monomer. It depends on Mg(2+) as a cofactor.

The protein localises to the cytoplasm. Its function is as follows. An essential GTPase which binds GTP, GDP and possibly (p)ppGpp with moderate affinity, with high nucleotide exchange rates and a fairly low GTP hydrolysis rate. Plays a role in control of the cell cycle, stress response, ribosome biogenesis and in those bacteria that undergo differentiation, in morphogenesis control. The chain is GTPase Obg from Shewanella denitrificans (strain OS217 / ATCC BAA-1090 / DSM 15013).